The chain runs to 424 residues: Histidinol dehydrogenase homolog (424 aa).

Positions 250 and 253 each coordinate Zn(2+). Residues glutamate 318 and histidine 319 each act as proton acceptor in the active site. Aspartate 352 and histidine 411 together coordinate Zn(2+).

Belongs to the histidinol dehydrogenase family. Zn(2+) is required as a cofactor.

This chain is Histidinol dehydrogenase homolog, found in Shouchella clausii (strain KSM-K16) (Alkalihalobacillus clausii).